The primary structure comprises 38 residues: MARPNPNKQVVELNRTSLYFGLLLIFVLAVLFSSYIFN.

Residues serine 17–phenylalanine 37 traverse the membrane as a helical segment.

It belongs to the PsbL family. As to quaternary structure, PSII is composed of 1 copy each of membrane proteins PsbA, PsbB, PsbC, PsbD, PsbE, PsbF, PsbH, PsbI, PsbJ, PsbK, PsbL, PsbM, PsbT, PsbX, PsbY, PsbZ, Psb30/Ycf12, at least 3 peripheral proteins of the oxygen-evolving complex and a large number of cofactors. It forms dimeric complexes.

Its subcellular location is the plastid. The protein localises to the chloroplast thylakoid membrane. In terms of biological role, one of the components of the core complex of photosystem II (PSII). PSII is a light-driven water:plastoquinone oxidoreductase that uses light energy to abstract electrons from H(2)O, generating O(2) and a proton gradient subsequently used for ATP formation. It consists of a core antenna complex that captures photons, and an electron transfer chain that converts photonic excitation into a charge separation. This subunit is found at the monomer-monomer interface and is required for correct PSII assembly and/or dimerization. In Chlamydomonas moewusii (Chlamydomonas eugametos), this protein is Photosystem II reaction center protein L.